The chain runs to 147 residues: Flagellar assembly factor FliW (147 aa).

The protein belongs to the FliW family. In terms of assembly, interacts with translational regulator CsrA and flagellin(s).

The protein localises to the cytoplasm. In terms of biological role, acts as an anti-CsrA protein, binds CsrA and prevents it from repressing translation of its target genes, one of which is flagellin. Binds to flagellin and participates in the assembly of the flagellum. The sequence is that of Flagellar assembly factor FliW from Chromobacterium violaceum (strain ATCC 12472 / DSM 30191 / JCM 1249 / CCUG 213 / NBRC 12614 / NCIMB 9131 / NCTC 9757 / MK).